The chain runs to 754 residues: Protein transport protein DSL1 (754 aa).

The interval Met1–Met200 is interaction with TIP20. Residues Ala406–Thr440 are interaction with RET1. Positions Ala406–Trp459 are interaction with RET2. Residues Trp425–Glu438 show a composition bias toward acidic residues. The tract at residues Trp425–Ala454 is disordered.

As to quaternary structure, component of a peripheral membrane protein complex consisting of DSL1, SEC39/DSL3 and TIP20. Bound to a SNARE complex consisting of UFE1, USE1, SEC20 and SEC22 or YKT6 through direct interaction of TIP20 with SEC20. Binds the coatomer complex through direct interaction with RET2/COPD and RET1/COPA. Binds TIP20 and SEC39/DSL3.

The protein resides in the endoplasmic reticulum membrane. Its function is as follows. Required for protein transport between the Golgi and the endoplasmic reticulum. May tether coatomer-coated retrograde transport vesicles to the ER membrane through interaction with coatomer as well as the SNARE complex. May contribute to the stabilization of the SNARE complex. This Saccharomyces cerevisiae (strain ATCC 204508 / S288c) (Baker's yeast) protein is Protein transport protein DSL1 (DSL1).